The following is a 104-amino-acid chain: Urease subunit beta (104 aa).

This sequence belongs to the urease beta subunit family. In terms of assembly, heterotrimer of UreA (gamma), UreB (beta) and UreC (alpha) subunits. Three heterotrimers associate to form the active enzyme.

The protein localises to the cytoplasm. The catalysed reaction is urea + 2 H2O + H(+) = hydrogencarbonate + 2 NH4(+). It participates in nitrogen metabolism; urea degradation; CO(2) and NH(3) from urea (urease route): step 1/1. The chain is Urease subunit beta from Rhodopseudomonas palustris (strain BisB18).